The primary structure comprises 305 residues: Glycine--tRNA ligase alpha subunit (305 aa).

This sequence belongs to the class-II aminoacyl-tRNA synthetase family. Tetramer of two alpha and two beta subunits.

The protein resides in the cytoplasm. The enzyme catalyses tRNA(Gly) + glycine + ATP = glycyl-tRNA(Gly) + AMP + diphosphate. The protein is Glycine--tRNA ligase alpha subunit of Streptococcus gordonii (strain Challis / ATCC 35105 / BCRC 15272 / CH1 / DL1 / V288).